Here is a 514-residue protein sequence, read N- to C-terminus: 2,3-bisphosphoglycerate-independent phosphoglycerate mutase (514 aa).

2 residues coordinate Mn(2+): Asp-14 and Ser-64. Ser-64 acts as the Phosphoserine intermediate in catalysis. Residues His-125, 155-156, Arg-187, Arg-193, 263-266, and Lys-336 each bind substrate; these read RD and RADR. Residues Asp-403, His-407, Asp-444, His-445, and His-463 each coordinate Mn(2+).

Belongs to the BPG-independent phosphoglycerate mutase family. Monomer. Mn(2+) serves as cofactor.

It catalyses the reaction (2R)-2-phosphoglycerate = (2R)-3-phosphoglycerate. It functions in the pathway carbohydrate degradation; glycolysis; pyruvate from D-glyceraldehyde 3-phosphate: step 3/5. Catalyzes the interconversion of 2-phosphoglycerate and 3-phosphoglycerate. The sequence is that of 2,3-bisphosphoglycerate-independent phosphoglycerate mutase from Escherichia coli (strain ATCC 8739 / DSM 1576 / NBRC 3972 / NCIMB 8545 / WDCM 00012 / Crooks).